The chain runs to 262 residues: Large ribosomal subunit protein eL8B (262 aa).

The tract at residues Met-1 to Gly-36 is disordered.

Belongs to the eukaryotic ribosomal protein eL8 family. Component of the large ribosomal subunit. Mature ribosomes consist of a small (40S) and a large (60S) subunit. The 40S subunit contains about 32 different proteins and 1 molecule of RNA (18S). The 60S subunit contains 45 different proteins and 3 molecules of RNA (25S, 5.8S and 5S).

It is found in the cytoplasm. Component of the ribosome, a large ribonucleoprotein complex responsible for the synthesis of proteins in the cell. The small ribosomal subunit (SSU) binds messenger RNAs (mRNAs) and translates the encoded message by selecting cognate aminoacyl-transfer RNA (tRNA) molecules. The large subunit (LSU) contains the ribosomal catalytic site termed the peptidyl transferase center (PTC), which catalyzes the formation of peptide bonds, thereby polymerizing the amino acids delivered by tRNAs into a polypeptide chain. The nascent polypeptides leave the ribosome through a tunnel in the LSU and interact with protein factors that function in enzymatic processing, targeting, and the membrane insertion of nascent chains at the exit of the ribosomal tunnel. This is Large ribosomal subunit protein eL8B from Candida albicans (strain SC5314 / ATCC MYA-2876) (Yeast).